The primary structure comprises 283 residues: Pantothenate synthetase (283 aa).

30–37 (MGYLHEGH) is a binding site for ATP. The active-site Proton donor is His-37. Gln-61 is a binding site for (R)-pantoate. Position 61 (Gln-61) interacts with beta-alanine. 147–150 (GLKD) lines the ATP pocket. Gln-153 provides a ligand contact to (R)-pantoate. ATP is bound by residues Val-176 and 184–187 (KSSR).

This sequence belongs to the pantothenate synthetase family. In terms of assembly, homodimer.

Its subcellular location is the cytoplasm. The enzyme catalyses (R)-pantoate + beta-alanine + ATP = (R)-pantothenate + AMP + diphosphate + H(+). Its pathway is cofactor biosynthesis; (R)-pantothenate biosynthesis; (R)-pantothenate from (R)-pantoate and beta-alanine: step 1/1. Its function is as follows. Catalyzes the condensation of pantoate with beta-alanine in an ATP-dependent reaction via a pantoyl-adenylate intermediate. The polypeptide is Pantothenate synthetase (Halalkalibacterium halodurans (strain ATCC BAA-125 / DSM 18197 / FERM 7344 / JCM 9153 / C-125) (Bacillus halodurans)).